The sequence spans 162 residues: Putative auxin-responsive protein IAA28 (162 aa).

The PB1 domain maps to 23 to 118; the sequence is SRFVKVFMHG…TVKRIYIVPA (96 aa). The segment at 122–141 is disordered; it reads NESEYQEEEEDNAAAAATAD.

The protein belongs to the Aux/IAA family. In terms of assembly, homodimers and heterodimers.

Its subcellular location is the nucleus. Functionally, aux/IAA proteins are short-lived transcriptional factors that function as repressors of early auxin response genes at low auxin concentrations. The sequence is that of Putative auxin-responsive protein IAA28 (IAA28) from Oryza sativa subsp. japonica (Rice).